The following is a 123-amino-acid chain: Small ribosomal subunit protein uS12 (123 aa).

Residues 1–30 are disordered; that stretch reads MPTIQQLVRKGRQDKVEKNKTPALEGSPQR. The span at 11-20 shows a compositional bias: basic and acidic residues; sequence GRQDKVEKNK. Aspartate 89 is modified (3-methylthioaspartic acid).

It belongs to the universal ribosomal protein uS12 family. In terms of assembly, part of the 30S ribosomal subunit. Contacts proteins S8 and S17. May interact with IF1 in the 30S initiation complex.

Functionally, with S4 and S5 plays an important role in translational accuracy. Interacts with and stabilizes bases of the 16S rRNA that are involved in tRNA selection in the A site and with the mRNA backbone. Located at the interface of the 30S and 50S subunits, it traverses the body of the 30S subunit contacting proteins on the other side and probably holding the rRNA structure together. The combined cluster of proteins S8, S12 and S17 appears to hold together the shoulder and platform of the 30S subunit. This chain is Small ribosomal subunit protein uS12 (rpsL), found in Streptomyces avermitilis (strain ATCC 31267 / DSM 46492 / JCM 5070 / NBRC 14893 / NCIMB 12804 / NRRL 8165 / MA-4680).